Reading from the N-terminus, the 352-residue chain is MVKETKLYDLLGVSPSANEQELKKGYRKAALKYHPDKPTGDTEKFKEISEAFEILNDPQKREIYDQYGLEAARSGGPSFGPGGPGGAGGAGGFPGGAGGFSGGHAFSNEDAFNIFSQFFGGSSPFGGADDSGFSFSSYPSGGGAGMGGMPGGMGGMHGGMGGMPGGFRSASSSPTYPEEETVQVNLPVSLEDLFVGKKKSFKIGRKGPHGASEKTQIDIQLKPGWKAGTKITYKNQGDYNPQTGRRKTLQFVIQEKSHPNFKRDGDDLIYTLPLSFKESLLGFSKTIQTIDGRTLPLSRVQPVQPSQTSTYPGQGMPTPKNPSQRGNLIVKYKVDYPISLNDAQKRAIDENF.

The 67-residue stretch at 4 to 70 folds into the J domain; it reads ETKLYDLLGV…REIYDQYGLE (67 aa). Position 275 is a phosphoserine (Ser-275). Residues 300 to 325 form a disordered region; that stretch reads VQPVQPSQTSTYPGQGMPTPKNPSQR. The segment covering 301 to 312 has biased composition (polar residues); sequence QPVQPSQTSTYP.

In terms of assembly, interacts with polyadenylate-binding protein PAB1.

The protein resides in the cytoplasm. It is found in the nucleus. Its function is as follows. Required for nuclear migration during mitosis. It is required for the normal initiation of translation. Might mediate the dissociation of a specific protein complex of the translation machinery. Essential for viability. This Saccharomyces cerevisiae (strain ATCC 204508 / S288c) (Baker's yeast) protein is Protein SIS1 (SIS1).